We begin with the raw amino-acid sequence, 56 residues long: Large ribosomal subunit protein bL32 (56 aa).

Residues 1-27 (MAVQQNKKSRSRRDMRRSHDALTTAAV) form a disordered region. Residues 7–16 (KKSRSRRDMR) are compositionally biased toward basic residues.

It belongs to the bacterial ribosomal protein bL32 family.

This Actinobacillus pleuropneumoniae serotype 7 (strain AP76) protein is Large ribosomal subunit protein bL32.